Consider the following 140-residue polypeptide: Nucleoside diphosphate kinase (140 aa).

Lys-9, Phe-57, Arg-85, Thr-91, Arg-102, and Asn-112 together coordinate ATP. His-115 functions as the Pros-phosphohistidine intermediate in the catalytic mechanism.

This sequence belongs to the NDK family. In terms of assembly, homotetramer. It depends on Mg(2+) as a cofactor.

The protein resides in the cytoplasm. The catalysed reaction is a 2'-deoxyribonucleoside 5'-diphosphate + ATP = a 2'-deoxyribonucleoside 5'-triphosphate + ADP. The enzyme catalyses a ribonucleoside 5'-diphosphate + ATP = a ribonucleoside 5'-triphosphate + ADP. In terms of biological role, major role in the synthesis of nucleoside triphosphates other than ATP. The ATP gamma phosphate is transferred to the NDP beta phosphate via a ping-pong mechanism, using a phosphorylated active-site intermediate. This chain is Nucleoside diphosphate kinase, found in Chlorobium luteolum (strain DSM 273 / BCRC 81028 / 2530) (Pelodictyon luteolum).